A 129-amino-acid polypeptide reads, in one-letter code: M-zodatoxin-Lt8a (129 aa).

The first 20 residues, 1–20 (MKYFVVALALVAAFACIAES), serve as a signal peptide directing secretion. The propeptide occupies 21-60 (KPAESEHELAEVEEENELADLEDAVWLEHLADLSDLEEAR). Residues 57–60 (EEAR) carry the Processing quadruplet motif motif.

Belongs to the cationic peptide 06 (cytoinsectotoxin) family. Cleavage of the propeptide depends on the processing quadruplet motif (XXXR, with at least one of X being E). As to expression, expressed by the venom gland.

Its subcellular location is the secreted. Its function is as follows. Insecticidal, cytolytic and antimicrobial peptide. Has insecticidal activity against the flesh fly S.carnaria, and against the cockroach N.cinerea. Has insecticidal activity against D.melanogaster. Has hemolytic activity against human erythrocytes (EC(50)=6 uM). Has cytolytic activity against insect Sf9 cells (EC(50)=1 uM) and human leukocytes (EC(50)=3 uM). Has antibacterial activity against the Gram-positive bacteria A.globiformis VKM Ac-1112 (MIC=0.5 uM), and B.subtilis VKM B-501 (MIC=0.6-0.9 uM), and against the Gram-negative bacteria E.coli C600 (MIC=0.5 uM), E.coli DH5alpha (MIC=0.9 uM), E.coli MH1 (MIC=0.5 uM), P.aeruginosa PAO1 (MIC=1.9 uM), and P.fluorescens VKM B-894 (MIC=3.8 uM). Lacks antimicrobial activity against the Gram-positive bacteria M.luteus and S.aureus, and against the Gram-negative bacterium S.marcescens. Forms voltage-dependent, ion-permeable channels in membranes. At high concentration causes cell membrane lysis. The polypeptide is M-zodatoxin-Lt8a (cit 1-1) (Lachesana tarabaevi (Spider)).